The chain runs to 242 residues: uncharacterized protein (242 aa).

The next 2 helical transmembrane spans lie at 4–24 and 34–54; these read NYQV…YYVV and LLFG…WLFG. A glycan (N-linked (GlcNAc...) asparagine; by host) is linked at asparagine 73. A run of 3 helical transmembrane segments spans residues 74–94, 106–126, and 162–182; these read YTIV…VIGY, VLTV…YGGF, and LDVF…FVMY. N-linked (GlcNAc...) asparagine; by host glycosylation is present at asparagine 185. The next 2 helical transmembrane spans lie at 189-209 and 217-237; these read VIGL…APTL and CLLS…STGI.

The protein localises to the membrane. This is an uncharacterized protein from Acanthamoeba polyphaga mimivirus (APMV).